The primary structure comprises 123 residues: Small ribosomal subunit protein uS12 (123 aa).

The disordered stretch occupies residues 1–31 (MPTINQLIRKPREAQKARDKAPALQASPQKR). Positions 10-21 (KPREAQKARDKA) are enriched in basic and acidic residues. Residue aspartate 89 is modified to 3-methylthioaspartic acid.

The protein belongs to the universal ribosomal protein uS12 family. As to quaternary structure, part of the 30S ribosomal subunit. Contacts proteins S8 and S17. May interact with IF1 in the 30S initiation complex.

Its function is as follows. With S4 and S5 plays an important role in translational accuracy. Functionally, interacts with and stabilizes bases of the 16S rRNA that are involved in tRNA selection in the A site and with the mRNA backbone. Located at the interface of the 30S and 50S subunits, it traverses the body of the 30S subunit contacting proteins on the other side and probably holding the rRNA structure together. The combined cluster of proteins S8, S12 and S17 appears to hold together the shoulder and platform of the 30S subunit. The protein is Small ribosomal subunit protein uS12 of Xanthobacter autotrophicus (strain ATCC BAA-1158 / Py2).